We begin with the raw amino-acid sequence, 441 residues long: ATP-dependent RNA helicase RhlB (441 aa).

Positions 9–37 (QKFADFSLNKEIKTALNESGFEFCTPIQA) match the Q motif motif. The Helicase ATP-binding domain maps to 40-219 (LPILLQKKDI…YDHMNEPEKV (180 aa)). Residue 53-60 (AQTGTGKT) coordinates ATP. Positions 165-168 (DEAD) match the DEAD box motif. The region spanning 243 to 390 (KMRLLLSLIE…VTNYDSEGLL (148 aa)) is the Helicase C-terminal domain. The tract at residues 401–441 (RKHNNRPQQGRNNSGRPQGRNGNRAGGRNGPRRHDQVRRHS) is disordered.

It belongs to the DEAD box helicase family. RhlB subfamily. In terms of assembly, component of the RNA degradosome, which is a multiprotein complex involved in RNA processing and mRNA degradation.

It localises to the cytoplasm. The enzyme catalyses ATP + H2O = ADP + phosphate + H(+). Its function is as follows. DEAD-box RNA helicase involved in RNA degradation. Has RNA-dependent ATPase activity and unwinds double-stranded RNA. The protein is ATP-dependent RNA helicase RhlB of Shewanella woodyi (strain ATCC 51908 / MS32).